A 638-amino-acid polypeptide reads, in one-letter code: Voltage-gated potassium channel KCNC2 (638 aa).

At Met-1–Arg-229 the chain is on the cytoplasmic side. Positions Leu-47–Ser-75 are disordered. Residues Pro-56–Pro-72 are compositionally biased toward pro residues. The Zn(2+) site is built by His-124, Cys-130, Cys-151, and Cys-152. The chain crosses the membrane as a helical span at residues Phe-230–Leu-248. Residues Asn-259 and Asn-266 are each glycosylated (N-linked (GlcNAc...) asparagine). The chain crosses the membrane as a helical span at residues Tyr-284–Phe-303. The Cytoplasmic segment spans residues Ser-304–Leu-314. The chain crosses the membrane as a helical span at residues Leu-315–Ser-337. A helical; Voltage-sensor membrane pass occupies residues Phe-346 to Leu-368. Residues Arg-369 to Glu-381 are Cytoplasmic-facing. A helical membrane pass occupies residues Phe-382–Tyr-401. K(+) is bound by residues Thr-437, Leu-438, Gly-439, and Tyr-440. The Selectivity filter signature appears at Thr-437–Asp-442. Residues Met-451–Val-473 traverse the membrane as a helical segment. Residues Asn-474–Leu-638 lie on the Cytoplasmic side of the membrane. The interval Ser-538–Gly-572 is disordered. At Ser-564 the chain carries Phosphoserine; by PKA. Residue Ser-600 is modified to Phosphoserine.

This sequence belongs to the potassium channel family. C (Shaw) (TC 1.A.1.2) subfamily. Kv3.2/KCNC2 sub-subfamily. Homotetramer and heterotetramer with other channel-forming alpha subunits, such as KCNC1. Interacts with KCNC1. Homotetramer or heterotetramer channel activity is regulated by association with modulating ancillary subunits such as KCNE1, KCNE2 and KCNE3, creating a functionally diverse range of channel complexes. Interacts with KCNE1, KCNE2 and KCNE3. In terms of processing, phosphorylated by PKA in cortical synaptosomes. cAMP-dependent phosphorylation inhibits channel activity. Histamine H2 receptor- and PKA-induced phosphorylation extends action potential spike duration, reduces action potential spike amplitude, sustains maximum firing frequency in hippocampal interneurons; also reduces the incidence of high-frequency oscillations in hippocampal CA3 pyramidal cell layers. In terms of tissue distribution, expressed in neurons of the visual cortex during postnatal development. Expressed in neurons of the globus pallidus at postnatal age day 7 (P7), onward. Expressed in thalamic relay neurons. Expressed in neurons in layer IV and deeper cortical layers of the neocortex. Expressed in hippocampal interneurons. Expressed in nonpyramidal interneurons in the basolateral amygdala. Expressed in retinal ganglion cells (at protein level). Widely expressed in the brain. Expressed in numerous thalamic relay neurons throughout the dorsal thalamus. Expressed in interneurons of the deep layers V-VI of the cerebral cortex, the CA1 and CA3 pyramidal and dentate gyrus (DG) granule cells of the hippocampus, in neurons of the caudate-putamen, globus pallidus and subthalamic nucleus. Also expressed in the optic layer of interior colliculus, the inferior colliculus, the red nucleus, the medial geniculate, the ventral lateral lemiscus, the reticulotegmental nucleus and in the deep cerebellar nuclei. Expressed in globus pallidus (GP) neurons.

It localises to the cell membrane. It is found in the membrane. The protein localises to the perikaryon. Its subcellular location is the cell projection. The protein resides in the axon. It localises to the synapse. It is found in the synaptosome. The protein localises to the dendrite. Its subcellular location is the postsynaptic cell membrane. The protein resides in the presynaptic cell membrane. It localises to the apical cell membrane. It is found in the basolateral cell membrane. It carries out the reaction K(+)(in) = K(+)(out). Inhibited by Stichodactyla helianthus peptide ShK. Inhibited by millimolar levels of tetraethylammonium (TEA). Contrary to other channels, inhibited only by millimolar levels of 4-aminopyridine (4-AP). Voltage-gated potassium channel that mediates transmembrane potassium transport in excitable membranes, primarily in the brain. Contributes to the regulation of the fast action potential repolarization and in sustained high-frequency firing in neurons of the central nervous system. Homotetramer channels mediate delayed-rectifier voltage-dependent potassium currents that activate rapidly at high-threshold voltages and inactivate slowly. Forms tetrameric channels through which potassium ions pass in accordance with their electrochemical gradient. The channel alternates between opened and closed conformations in response to the voltage difference across the membrane. Can form functional homotetrameric channels and heterotetrameric channels that contain variable proportions of KCNC1, and possibly other family members as well; channel properties depend on the type of alpha subunits that are part of the channel. Channel properties may be modulated either by the association with ancillary subunits, such as KCNE1, KCNE2 and KCNE3 or indirectly by nitric oxide (NO) through a cGMP- and PKG-mediated signaling cascade, slowing channel activation and deactivation of delayed rectifier potassium channels. Contributes to fire sustained trains of very brief action potentials at high frequency in retinal ganglion cells, thalamocortical and suprachiasmatic nucleus (SCN) neurons and in hippocampal and neocortical interneurons. Sustained maximal action potential firing frequency in inhibitory hippocampal interneurons is negatively modulated by histamine H2 receptor activation in a cAMP- and protein kinase (PKA) phosphorylation-dependent manner. Plays a role in maintaining the fidelity of synaptic transmission in neocortical GABAergic interneurons by generating action potential (AP) repolarization at nerve terminals, thus reducing spike-evoked calcium influx and GABA neurotransmitter release. Required for long-range synchronization of gamma oscillations over distance in the neocortex. Contributes to the modulation of the circadian rhythm of spontaneous action potential firing in suprachiasmatic nucleus (SCN) neurons in a light-dependent manner. The chain is Voltage-gated potassium channel KCNC2 from Rattus norvegicus (Rat).